We begin with the raw amino-acid sequence, 360 residues long: MTDLHSLESDLLAQVEGAADEAALEGVRVAALGKKGAVSELLKTLGSLSPEERRERGPLINGLRDRVQGAILARRETLAEAALAARLSAERIDVTLPVREGPETRGRVHPITQVIDEITAIFGDMGFAVAEGPDIETDELNFTALNFPEGHPAREMHDTFFLPPGRDGTRKLLRTHTSPVQVRTMRSQQPPIRVICPGRTYRHDSDQTHTPMFHQVEGLVIDRTATLAHLKWILEEFCKAFFEVESVKMRFRPSFFPFTEPSAEVDIQCSRKGGEIRFGEGDDWLEILGCGMVHPNVLRQCGLDPDEVQGFAWGMGIDRIAMLKYGMPDLRPFFEADVRWLDHYGFRPLDIPSLVGGLTG.

Glu-260 contacts Mg(2+).

It belongs to the class-II aminoacyl-tRNA synthetase family. Phe-tRNA synthetase alpha subunit type 1 subfamily. Tetramer of two alpha and two beta subunits. The cofactor is Mg(2+).

It localises to the cytoplasm. It catalyses the reaction tRNA(Phe) + L-phenylalanine + ATP = L-phenylalanyl-tRNA(Phe) + AMP + diphosphate + H(+). The chain is Phenylalanine--tRNA ligase alpha subunit from Methylobacterium sp. (strain 4-46).